The chain runs to 229 residues: Artemin (229 aa).

Ala1 carries the N-acetylalanine modification. Residues His25–Gly173 enclose the Ferritin-like diiron domain.

This sequence belongs to the ferritin family.

This is Artemin from Artemia salina (Brine shrimp).